A 273-amino-acid polypeptide reads, in one-letter code: uncharacterized protein (273 aa).

It belongs to the AtsA family.

This is an uncharacterized protein from Mycobacterium tuberculosis (strain CDC 1551 / Oshkosh).